The sequence spans 37 residues: Large ribosomal subunit protein bL36 (37 aa).

This sequence belongs to the bacterial ribosomal protein bL36 family.

The sequence is that of Large ribosomal subunit protein bL36 from Ureaplasma urealyticum serovar 10 (strain ATCC 33699 / Western).